The chain runs to 1022 residues: MVIAVEGGFVHEEEEVDHPIRYLPLGRVYSSSAPCPLPKKPRSAEDGKPPVIVYYRRRRKKPRVEGPPPSPATAPPMLHPREDDEDEEVTRRKGSLKYELLSLGQAPPALGGDGEEPARRRCLRRSGGAERRGYFSEPKRRQRQGVHKEAASSAGRRWLELEIEAADPLAFVGLGCKVFWPLDEDWYKGSITGYNEATKKHSVKYDDGESEDLNLADERIKFSISSEEMKCRNLKFGISNLNKRGYDELLALAVSLHDYQGLDPGDLVWAKLTGHAMWPAVVVDESNVPANRALKPGRLDQSILVQFFGTHDFARIKLKQAVPFLNGLLSSLHLKCKQARFYRSLEEAKEFLCTQLLPENMLQLQKSMEKGSSDANSNKDVHSCDNLSEDKTAESGGDYDEMTPIELGNLRVSKLGRIVTDSDYFHNKKHIWPEGYTAFRKFRSVKDPHVVILYKMEVLRNSDIKARPLFRVTSEDGTQIDGSTPNTCWKEIYCRLKEKQRNVASGLDRDVCQGSGSYMFGFSNPQIRQLIQELPNARSCLKYFENAGDTFRGYRAVHVNWKDLDYCSVCDMDEEYEDNLFLQCDKCRMMVHARCYGELEPLNGVLWLCNLCRPEAPRVSPRCCLCPVTGGAMKPTTDGRWAHLACAIWIPETCLKDVKRMEPIDGLSRINKDRWKLLCSICGVAYGACIQCSHPTCRVAYHPLCARAADLCVELEDDDKIHLMLLDEDEDPCIRLLSYCKKHRQPSTERPSLESNLAKPAVVVQTDAVPPSGCARTEPYNIHGRRGQKQPQVMATASVKRLYVENMPYIVSGFCQNRVGHDAISEPIQSVGFLDVAHQEAVGNVSSMIEKYKSMKATFRRRLAFGKSRIHGFGVFAKVSHKAGDMMIEYIGELVRPPISDIRERRIYNSLVGAGTYMFRIDDERVIDATRAGSIAHLINHSCEPNCYSRVISVLGDEHIIIFAKRDINPWEELTYDYRFVSSDQRLPCYCGFPKCRGVVNDVEAEGQSAKIRVNRSELFQQ.

The interval 31–151 (SSAPCPLPKK…QRQGVHKEAA (121 aa)) is disordered. Over residues 65–78 (EGPPPSPATAPPML) the composition is skewed to pro residues. Residues 127 to 139 (GGAERRGYFSEPK) are compositionally biased toward basic and acidic residues. The 64-residue stretch at 264 to 327 (PGDLVWAKLT…LKQAVPFLNG (64 aa)) folds into the PWWP domain. The span at 367–393 (SMEKGSSDANSNKDVHSCDNLSEDKTA) shows a compositional bias: basic and acidic residues. Residues 367–399 (SMEKGSSDANSNKDVHSCDNLSEDKTAESGGDY) form a disordered region. Positions 402-461 (MTPIELGNLRVSKLGRIVTDSDYFHNKKHIWPEGYTAFRKFRSVKDPHVVILYKMEVLRN) constitute an FYR N-terminal domain. Residues 465–548 (KARPLFRVTS…SCLKYFENAG (84 aa)) form the FYR C-terminal domain. Residues 553 to 609 (GYRAVHVNWKDLDYCSVCDMDEEYEDNLFLQCDKCRMMVHARCYGELEPLNGVLWLC) form a Phorbol-ester/DAG-type zinc finger. 2 PHD-type zinc fingers span residues 564–615 (LDYC…CRPE) and 677–744 (LLCS…KKHR). Residues 620 to 744 (SPRCCLCPVT…RLLSYCKKHR (125 aa)) are extended PHD domain (ePHD). In terms of domain architecture, SET spans 861-979 (RRLAFGKSRI…PWEELTYDYR (119 aa)). Cysteine 943 lines the Zn(2+) pocket. Tyrosine 978 is an S-adenosyl-L-methionine binding site. A Post-SET domain is found at 985–1001 (QRLPCYCGFPKCRGVVN). Cysteine 989, cysteine 991, and cysteine 996 together coordinate Zn(2+).

The protein belongs to the class V-like SAM-binding methyltransferase superfamily. Histone-lysine methyltransferase family. TRX/MLL subfamily. In terms of assembly, interacts with EHD3. In terms of tissue distribution, expressed in leaf blades and panicles.

It localises to the nucleus. It catalyses the reaction L-lysyl(4)-[histone H3] + S-adenosyl-L-methionine = N(6)-methyl-L-lysyl(4)-[histone H3] + S-adenosyl-L-homocysteine + H(+). Possesses histone H3 methyltransferase activity in vitro. Methylates 'Lys-4' of histone H3. H3 'Lys-4' methylation represents a specific tag for epigenetic transcriptional activation. Functions as a receptor for the lipid messenger phosphatidylinositol 5-phosphate (PI5P), which negatively regulates its transcriptional activation activity. Involved in the regulation of flowering time and floral induction under long day (LD) conditions. Acts as an activator of flowering under LD conditions. May function through binding to EHD3, a repressor of GHD7. This is Histone-lysine N-methyltransferase TRX1 from Oryza sativa subsp. japonica (Rice).